The chain runs to 220 residues: Small ribosomal subunit protein uS3 (220 aa).

The 69-residue stretch at 43-111 (IRSYLTKTLD…QVQLNILEVK (69 aa)) folds into the KH type-2 domain.

It belongs to the universal ribosomal protein uS3 family. In terms of assembly, part of the 30S ribosomal subunit. Forms a tight complex with proteins S10 and S14.

Its function is as follows. Binds the lower part of the 30S subunit head. Binds mRNA in the 70S ribosome, positioning it for translation. The sequence is that of Small ribosomal subunit protein uS3 from Tropheryma whipplei (strain TW08/27) (Whipple's bacillus).